The chain runs to 144 residues: Large ribosomal subunit protein uL15 (144 aa).

The segment at 1–54 (MRLNTLSPAEGSKKAGKRLGRGIGSGLGKTGGRGHKGQKSRSGGGVRRGFEGGQ) is disordered. Residues 21–31 (RGIGSGLGKTG) show a composition bias toward gly residues.

This sequence belongs to the universal ribosomal protein uL15 family. As to quaternary structure, part of the 50S ribosomal subunit.

Binds to the 23S rRNA. The chain is Large ribosomal subunit protein uL15 from Escherichia coli (strain K12 / MC4100 / BW2952).